Consider the following 725-residue polypeptide: Phosphatase and actin regulator 4A (725 aa).

A compositionally biased stretch (polar residues) spans 1-12; it reads MGQGASTQTLNP. Residues 1 to 597 are disordered; the sequence is MGQGASTQTL…SSTWNNKEQW (597 aa). The span at 55 to 64 shows a compositional bias: basic residues; sequence KPWKWRKKKT. 3 stretches are compositionally biased toward basic and acidic residues: residues 65–100, 124–147, and 155–164; these read SDKF…KDIP, GDRK…GERK, and KRNDGTERMT. One copy of the RPEL 1 repeat lies at 75-100; it reads LVLERKMSVRKPREELIERGLLKDIP. The segment covering 166-177 has biased composition (polar residues); that stretch reads MIQSFQKMSLMQ. A compositionally biased stretch (low complexity) spans 212 to 221; the sequence is VIAAPSSAEP. Residues 222-235 are compositionally biased toward pro residues; it reads APVPPPPIAKPPPR. 2 stretches are compositionally biased toward low complexity: residues 265 to 276 and 292 to 313; these read PAHTTPATVSTH and PAHV…LLKQ. The span at 359–368 shows a compositional bias: polar residues; the sequence is TPVTKRNSGD. Over residues 374-384 the composition is skewed to pro residues; sequence PEPPPPAPTSV. Low complexity predominate over residues 385 to 401; it reads PIPAAAPISAPPSTQSD. Residues 402–417 show a composition bias toward pro residues; the sequence is PPSPTTEPPSQPPPLP. The span at 497–510 shows a compositional bias: basic and acidic residues; the sequence is QKPELEPRSRRGLV. 2 stretches are compositionally biased toward acidic residues: residues 522–536 and 545–554; these read AGSE…ESDS and DNEEDDDEED. Residues 567 to 585 are compositionally biased toward basic and acidic residues; sequence KDTLALKLERQQEKEKSQE. RPEL repeat units follow at residues 606 to 631 and 644 to 669; these read TALT…LAKN and RRLT…RFHE.

It belongs to the phosphatase and actin regulator family. Binds ppp1ca and actin.

It is found in the cytoplasm. It localises to the cell projection. The protein localises to the lamellipodium. Functionally, regulator of protein phosphatase 1 (PP1) required for neural tube and optic fissure closure, and enteric neural crest cell (ENCCs) migration during development. Acts as an activator of PP1. During neural tube closure, localizes to the ventral neural tube and activates PP1, leading to down-regulate cell proliferation within cranial neural tissue and the neural retina. Also acts as a regulator of migration of enteric neural crest cells (ENCCs) by activating PP1, leading to repression of the integrin signaling through the rho/rock pathway. The chain is Phosphatase and actin regulator 4A (phactr4a) from Danio rerio (Zebrafish).